Reading from the N-terminus, the 330-residue chain is Aspartate--ammonia ligase (330 aa).

It belongs to the class-II aminoacyl-tRNA synthetase family. AsnA subfamily.

The protein localises to the cytoplasm. The catalysed reaction is L-aspartate + NH4(+) + ATP = L-asparagine + AMP + diphosphate + H(+). Its pathway is amino-acid biosynthesis; L-asparagine biosynthesis; L-asparagine from L-aspartate (ammonia route): step 1/1. The polypeptide is Aspartate--ammonia ligase (Streptococcus pyogenes serotype M5 (strain Manfredo)).